The following is a 164-amino-acid chain: Ubiquitin-fold modifier-conjugating enzyme 1 (164 aa).

Residue cysteine 116 is the Glycyl thioester intermediate of the active site.

Belongs to the ubiquitin-conjugating enzyme family. UFC1 subfamily.

E2-like enzyme which forms an intermediate with UFM1 via a thioester linkage. This chain is Ubiquitin-fold modifier-conjugating enzyme 1, found in Drosophila erecta (Fruit fly).